A 270-amino-acid polypeptide reads, in one-letter code: Protoheme IX farnesyltransferase (270 aa).

Transmembrane regions (helical) follow at residues 13–30 (LALLNGIAAVAGHALVPD), 33–53 (HATLWVALAGVAILAAGGSAL), 95–115 (LLVLAAGGPVPPLLGAVALAW), 129–149 (LALAIGAVSGALPPVIGWTLA), 156–176 (YRIILLAGIFFLWQVPHFWLF), 207–227 (LWLGALAASVLLLPAFGLMAP), and 249–269 (EATLFSCLNAFPPLMALALLL).

Belongs to the UbiA prenyltransferase family. Protoheme IX farnesyltransferase subfamily.

The protein localises to the cell inner membrane. It catalyses the reaction heme b + (2E,6E)-farnesyl diphosphate + H2O = Fe(II)-heme o + diphosphate. The protein operates within porphyrin-containing compound metabolism; heme O biosynthesis; heme O from protoheme: step 1/1. Functionally, converts heme B (protoheme IX) to heme O by substitution of the vinyl group on carbon 2 of heme B porphyrin ring with a hydroxyethyl farnesyl side group. The sequence is that of Protoheme IX farnesyltransferase from Geobacter sulfurreducens (strain ATCC 51573 / DSM 12127 / PCA).